A 389-amino-acid chain; its full sequence is Chitin-binding protein CbpD (389 aa).

Positions 1–25 are cleaved as a signal peptide; that stretch reads MKHYSATLALLPLTLALFLPQAAHA. A Chitin-binding type-4 domain is found at 26–208; it reads HGSMETPPSR…EAFYACIDVS (183 aa). Phosphotyrosine is present on Tyr-37. Ser-210 carries the post-translational modification Phosphoserine.

It localises to the secreted. Binds but does not hydrolyze chitin. In Pseudomonas aeruginosa (strain UCBPP-PA14), this protein is Chitin-binding protein CbpD (cpbD).